The chain runs to 164 residues: Probable metalloprotease y4qB (164 aa).

The MPN domain occupies 5–142 (IWIPESVVEA…WLPHAWIGQL (138 aa)). Zn(2+) contacts are provided by His-89, His-91, and Asp-103.

This sequence belongs to the peptidase M67B family.

In Sinorhizobium fredii (strain NBRC 101917 / NGR234), this protein is Probable metalloprotease y4qB.